Here is a 217-residue protein sequence, read N- to C-terminus: Ras-related protein RABA1f (217 aa).

Position 20–27 (20–27 (GDSGVGKS)) interacts with GTP. Residues 42 to 50 (SKSTIGVEF) carry the Effector region motif. GTP contacts are provided by residues 68 to 72 (DTAGQ), 126 to 129 (NKAD), and 156 to 157 (SA). 2 S-geranylgeranyl cysteine lipidation sites follow: cysteine 214 and cysteine 215.

The protein belongs to the small GTPase superfamily. Rab family.

Its subcellular location is the cell membrane. Functionally, intracellular vesicle trafficking and protein transport. In Arabidopsis thaliana (Mouse-ear cress), this protein is Ras-related protein RABA1f (RABA1F).